The sequence spans 385 residues: Cellulase CelDZ1 (385 aa).

Residues 6–26 (INKWYFFVGMLVIFAVIISLI) traverse the membrane as a helical segment. Residues His-87, 91 to 92 (WF), Tyr-118, and His-153 each bind substrate. The active-site Proton donor is the Glu-192. Tyr-261 lines the substrate pocket. Glu-294 functions as the Nucleophile in the catalytic mechanism. Substrate-binding positions include 300–301 (AS), Trp-328, and 333–335 (KNE).

The protein belongs to the glycosyl hydrolase 5 (cellulase A) family. Monomer.

It is found in the cell membrane. The enzyme catalyses Endohydrolysis of (1-&gt;4)-beta-D-glucosidic linkages in cellulose, lichenin and cereal beta-D-glucans.. With respect to regulation, activity is enhanced by 1mM Mn(2+), but is not affected by 1mM Ca(2+), Mg(2+), Zn(2+), K(+), Na(+) or Li(+). Activity is not inhibited by EDTA (in vitro). Its function is as follows. Thermostable endoglucanase that has high activity with soluble polymeric substrates containing beta-1,4-glycosidic bonds, such as carboxymethyl cellulose (CMC) and barley beta-D-glucan (in vitro). Has no activity with cellobiose and filter paper. Has no activity with substrates containing beta-1,3-linked glycans, such as laminarin. Likewise, lacks activity with xylan, galactomannan and pectin. The polypeptide is Cellulase CelDZ1 (Thermoanaerobacterium sp).